A 371-amino-acid polypeptide reads, in one-letter code: Cytochrome b (371 aa).

Helical transmembrane passes span 25-45 (FGSMLLSCLFLQTTTGFFLAI), 69-90 (WIMQNTHAISASAFFICIYIHI), 105-125 (WLTGVALLTTLMATAFFGYVL), and 170-190 (FFALHFILPFLIISLSSIHII). Residues histidine 75 and histidine 89 each contribute to the heme b site. The heme b site is built by histidine 174 and histidine 188. Position 193 (histidine 193) interacts with a ubiquinone. 4 helical membrane-spanning segments follow: residues 218–238 (YKDLLMFITLMTMLLLTLSFM), 280–300 (LGGALALTMSIIILTTAPFTH), 312–332 (LAQTLFWTLIATFITITWAAT), and 339–358 (FLLISQTTAILYFSFFIMNP).

It belongs to the cytochrome b family. In terms of assembly, the cytochrome bc1 complex contains 3 respiratory subunits (MT-CYB, CYC1 and UQCRFS1), 2 core proteins (UQCRC1 and UQCRC2) and probably 6 low-molecular weight proteins. The cofactor is heme b.

The protein localises to the mitochondrion inner membrane. Its function is as follows. Component of the ubiquinol-cytochrome c reductase complex (complex III or cytochrome b-c1 complex) that is part of the mitochondrial respiratory chain. The b-c1 complex mediates electron transfer from ubiquinol to cytochrome c. Contributes to the generation of a proton gradient across the mitochondrial membrane that is then used for ATP synthesis. The protein is Cytochrome b (MT-CYB) of Laticauda colubrina (Yellow-lipped sea krait).